The following is a 387-amino-acid chain: EARP and GARP complex-interacting protein 1 (387 aa).

The residue at position 1 (Met1) is an N-acetylmethionine. 6 WD repeats span residues 4-48 (DAPV…IIDF), 55-101 (INKN…VWRM), 124-164 (ELLC…LWDL), 172-214 (VLAS…GWDT), 219-258 (QIYC…FWDT), and 263-302 (EPVK…LSNM). The segment at 310-335 (FGHLVDDDDISDQEDHRSEEKSKEPL) is disordered. Ser320 carries the post-translational modification Phosphoserine. The span at 322–335 (QEDHRSEEKSKEPL) shows a compositional bias: basic and acidic residues. One copy of the WD 7 repeat lies at 338-379 (NVIATYEEHEDSVYAVDWSSADPWLFASLSYDGRLVINRVPR).

The protein belongs to the WD repeat EIPR1 family. Interacts with two multisubunit tethering complexes: EARP composed of VPS50, VPS51, VPS52 and VPS53 subunits and GARP complex composed of VPS51, VPS52, VPS53 and VPS54 subunits. Interacts with SNAP29.

It localises to the golgi apparatus. The protein resides in the trans-Golgi network. In terms of biological role, acts as a component of endosomal retrieval machinery that is involved in protein transport from early endosomes to either recycling endosomes or the trans-Golgi network. Mediates the recruitment of Golgi-associated retrograde protein (GARP) complex to the trans-Golgi network and controls early endosome-to-Golgi transport of internalized protein. Promotes the recycling of internalized transferrin receptor (TFRC) to the plasma membrane through interaction with endosome-associated recycling protein (EARP) complex. Controls proper insulin distribution and secretion, and retention of cargo in mature dense core vesicles. Required for the stability of the endosome-associated retrograde protein (EARP) complex subunits and for proper localization and association of EARP with membranes. The polypeptide is EARP and GARP complex-interacting protein 1 (Homo sapiens (Human)).